Reading from the N-terminus, the 398-residue chain is Nicotinate phosphoribosyltransferase (398 aa).

Position 214 is a phosphohistidine; by autocatalysis (His214).

This sequence belongs to the NAPRTase family. Transiently phosphorylated on a His residue during the reaction cycle. Phosphorylation strongly increases the affinity for substrates and increases the rate of nicotinate D-ribonucleotide production. Dephosphorylation regenerates the low-affinity form of the enzyme, leading to product release.

It catalyses the reaction nicotinate + 5-phospho-alpha-D-ribose 1-diphosphate + ATP + H2O = nicotinate beta-D-ribonucleotide + ADP + phosphate + diphosphate. The protein operates within cofactor biosynthesis; NAD(+) biosynthesis; nicotinate D-ribonucleotide from nicotinate: step 1/1. Its function is as follows. Catalyzes the synthesis of beta-nicotinate D-ribonucleotide from nicotinate and 5-phospho-D-ribose 1-phosphate at the expense of ATP. This is Nicotinate phosphoribosyltransferase from Xanthomonas campestris pv. campestris (strain 8004).